Reading from the N-terminus, the 92-residue chain is MKTLLLTLVVVTIVCLDLGYTRRCFITPDVRSERCPPGQEVCYTKTWCDGFCGSRGKRVDLGCAATCPTPKKKDIKIICCSKDNCNTFPKWP.

Residues methionine 1–threonine 21 form the signal peptide. 5 disulfide bridges follow: cysteine 24–cysteine 42, cysteine 35–cysteine 63, cysteine 48–cysteine 52, cysteine 67–cysteine 79, and cysteine 80–cysteine 85.

This sequence belongs to the three-finger toxin family. Long-chain subfamily. Type II alpha-neurotoxin sub-subfamily. Expressed by the venom gland.

The protein localises to the secreted. Binds with high affinity to muscular (alpha-1/CHRNA1) and neuronal (alpha-7/CHRNA7) nicotinic acetylcholine receptor (nAChR) and inhibits acetylcholine from binding to the receptor, thereby impairing neuromuscular and neuronal transmission. The protein is Long neurotoxin 1 of Oxyuranus microlepidotus (Inland taipan).